A 301-amino-acid polypeptide reads, in one-letter code: tRNA pseudouridine synthase B (301 aa).

Asp-48 serves as the catalytic Nucleophile.

Belongs to the pseudouridine synthase TruB family. Type 1 subfamily.

It catalyses the reaction uridine(55) in tRNA = pseudouridine(55) in tRNA. Responsible for synthesis of pseudouridine from uracil-55 in the psi GC loop of transfer RNAs. In Mycobacterium ulcerans (strain Agy99), this protein is tRNA pseudouridine synthase B.